The sequence spans 590 residues: Arginine--tRNA ligase (590 aa).

Positions 134–144 (ANPTGPMHVGH) match the 'HIGH' region motif.

The protein belongs to the class-I aminoacyl-tRNA synthetase family. In terms of assembly, monomer.

It is found in the cytoplasm. The enzyme catalyses tRNA(Arg) + L-arginine + ATP = L-arginyl-tRNA(Arg) + AMP + diphosphate. The protein is Arginine--tRNA ligase of Beijerinckia indica subsp. indica (strain ATCC 9039 / DSM 1715 / NCIMB 8712).